A 142-amino-acid polypeptide reads, in one-letter code: Ribosome maturation factor RimP (142 aa).

Belongs to the RimP family.

The protein resides in the cytoplasm. Required for maturation of 30S ribosomal subunits. The chain is Ribosome maturation factor RimP from Aromatoleum aromaticum (strain DSM 19018 / LMG 30748 / EbN1) (Azoarcus sp. (strain EbN1)).